A 365-amino-acid chain; its full sequence is Ribosomal RNA large subunit methyltransferase F (365 aa).

Positions 1–50 (MSKPAVKSVPSATAKTATRAANPRQKAKAPKQAKPEGKGRAKPSKDKPRA) are disordered. Basic and acidic residues predominate over residues 33–50 (AKPEGKGRAKPSKDKPRA).

Belongs to the methyltransferase superfamily. METTL16/RlmF family.

It is found in the cytoplasm. It catalyses the reaction adenosine(1618) in 23S rRNA + S-adenosyl-L-methionine = N(6)-methyladenosine(1618) in 23S rRNA + S-adenosyl-L-homocysteine + H(+). Functionally, specifically methylates the adenine in position 1618 of 23S rRNA. This chain is Ribosomal RNA large subunit methyltransferase F, found in Shewanella baltica (strain OS195).